The following is a 32-amino-acid chain: Delta-conotoxin-like CnVIC (32 aa).

Cystine bridges form between Cys3–Cys18, Cys10–Cys22, and Cys17–Cys27. Residues Pro6 and Pro14 each carry the 4-hydroxyproline modification.

This sequence belongs to the conotoxin O1 superfamily. As to expression, expressed by the venom duct.

The protein resides in the secreted. Its function is as follows. Delta-conotoxins bind to site 6 of voltage-gated sodium channels (Nav) and inhibit the inactivation process. This toxin acts on Nav1.2/SCN2A, Nav1.4/SCN4A, Nav1.5/SCN5A (weak activity), Nav1.6/SCN8A (EC(50)=2.5 uM). The protein is Delta-conotoxin-like CnVIC of Conus consors (Singed cone).